Consider the following 412-residue polypeptide: Serine hydroxymethyltransferase (412 aa).

Residues L125 and G129–L131 contribute to the (6S)-5,6,7,8-tetrahydrofolate site. K234 is modified (N6-(pyridoxal phosphate)lysine). Residue E250 participates in (6S)-5,6,7,8-tetrahydrofolate binding.

The protein belongs to the SHMT family. In terms of assembly, homodimer. Pyridoxal 5'-phosphate is required as a cofactor.

The protein resides in the cytoplasm. It carries out the reaction (6R)-5,10-methylene-5,6,7,8-tetrahydrofolate + glycine + H2O = (6S)-5,6,7,8-tetrahydrofolate + L-serine. The protein operates within one-carbon metabolism; tetrahydrofolate interconversion. It participates in amino-acid biosynthesis; glycine biosynthesis; glycine from L-serine: step 1/1. Its function is as follows. Catalyzes the reversible interconversion of serine and glycine with tetrahydrofolate (THF) serving as the one-carbon carrier. This reaction serves as the major source of one-carbon groups required for the biosynthesis of purines, thymidylate, methionine, and other important biomolecules. Also exhibits THF-independent aldolase activity toward beta-hydroxyamino acids, producing glycine and aldehydes, via a retro-aldol mechanism. In Deinococcus geothermalis (strain DSM 11300 / CIP 105573 / AG-3a), this protein is Serine hydroxymethyltransferase.